The chain runs to 242 residues: Dehydration-responsive element-binding protein 1J (242 aa).

Over residues 20 to 29 (SSATTAATAT) the composition is skewed to low complexity. The tract at residues 20–44 (SSATTAATATGPASPKRPAGRTKFQ) is disordered. Positions 50–109 (VFRGVRRRGRAGRWVCEVRVPGSRGDRLWVGTFDTAEEAARAHDAAMLALCGASASLNFA) form a DNA-binding region, AP2/ERF. The tract at residues 143–184 (FQRRGSTAATATATSGDAASTAPPSSSPVLSPNDDNASSAST) is disordered. A compositionally biased stretch (low complexity) spans 148-184 (STAATATATSGDAASTAPPSSSPVLSPNDDNASSAST).

Belongs to the AP2/ERF transcription factor family. ERF subfamily.

The protein resides in the nucleus. Its function is as follows. Transcriptional activator that binds specifically to the DNA sequence 5'-[AG]CCGAC-3'. Binding to the C-repeat/DRE element mediates high salinity- and dehydration-inducible transcription. This Oryza sativa subsp. japonica (Rice) protein is Dehydration-responsive element-binding protein 1J (DREB1J).